A 312-amino-acid polypeptide reads, in one-letter code: Acetyl-coenzyme A carboxylase carboxyl transferase subunit alpha (312 aa).

In terms of domain architecture, CoA carboxyltransferase C-terminal spans 36-286 (NLEKEISKTY…ADYVKKSLNE (251 aa)).

The protein belongs to the AccA family. In terms of assembly, acetyl-CoA carboxylase is a heterohexamer composed of biotin carboxyl carrier protein (AccB), biotin carboxylase (AccC) and two subunits each of ACCase subunit alpha (AccA) and ACCase subunit beta (AccD).

The protein resides in the cytoplasm. It carries out the reaction N(6)-carboxybiotinyl-L-lysyl-[protein] + acetyl-CoA = N(6)-biotinyl-L-lysyl-[protein] + malonyl-CoA. Its pathway is lipid metabolism; malonyl-CoA biosynthesis; malonyl-CoA from acetyl-CoA: step 1/1. Component of the acetyl coenzyme A carboxylase (ACC) complex. First, biotin carboxylase catalyzes the carboxylation of biotin on its carrier protein (BCCP) and then the CO(2) group is transferred by the carboxyltransferase to acetyl-CoA to form malonyl-CoA. The sequence is that of Acetyl-coenzyme A carboxylase carboxyl transferase subunit alpha from Campylobacter jejuni subsp. jejuni serotype O:23/36 (strain 81-176).